Reading from the N-terminus, the 321-residue chain is GDP-L-fucose synthase (321 aa).

14 to 20 (GGSGLVG) lines the NADP(+) pocket. Tyrosine 143 (proton donor/acceptor) is an active-site residue. Residues lysine 147, 170–173 (PTNV), and histidine 186 each bind NADP(+). Lysine 194, tryptophan 208, arginine 215, and aspartate 277 together coordinate substrate.

It belongs to the NAD(P)-dependent epimerase/dehydratase family. Fucose synthase subfamily. As to quaternary structure, homodimer.

It carries out the reaction GDP-beta-L-fucose + NADP(+) = GDP-4-dehydro-alpha-D-rhamnose + NADPH + H(+). It functions in the pathway nucleotide-sugar biosynthesis; GDP-L-fucose biosynthesis via de novo pathway; GDP-L-fucose from GDP-alpha-D-mannose: step 2/2. Functionally, catalyzes the two-step NADP-dependent conversion of GDP-4-dehydro-6-deoxy-D-mannose to GDP-fucose, involving an epimerase and a reductase reaction. The polypeptide is GDP-L-fucose synthase (Mus musculus (Mouse)).